Reading from the N-terminus, the 451-residue chain is Multidrug export protein MepA (451 aa).

A run of 12 helical transmembrane segments spans residues 26–46 (MIGTLLSVIYGILNIYFIGFL), 54–74 (AISLTLPVFAILMGLGNLFGV), 97–117 (SFSIYGGIALGLIVILVTLPF), 139–159 (LKVMFLSAPFVILFFILEQFA), 170–190 (IGMLASVGLNIILDPILIFGF), 194–214 (VVGAALGTAISNVAAALFFIV), 245–265 (IPAFLMSILMGFTGLVLNLFL), 282–302 (LVQFPELIIMGLCEGVVPLIA), 318–338 (AVIMSIGVIFVVCMIAVFTIG), 355–375 (ATFILKVTMTSLLLNGIGFLF), 397–417 (AIIIPVLFIMNALFGLTGVIW), and 418–438 (SLLIAESLCALAAMLIVYLLR).

Belongs to the multi antimicrobial extrusion (MATE) (TC 2.A.66.1) family. MepA subfamily.

The protein localises to the cell membrane. Functionally, multidrug resistance efflux protein. This chain is Multidrug export protein MepA (mepA), found in Staphylococcus aureus (strain MSSA476).